The following is a 201-amino-acid chain: Probable nicotinate-nucleotide adenylyltransferase (201 aa).

The protein belongs to the NadD family.

The enzyme catalyses nicotinate beta-D-ribonucleotide + ATP + H(+) = deamido-NAD(+) + diphosphate. Its pathway is cofactor biosynthesis; NAD(+) biosynthesis; deamido-NAD(+) from nicotinate D-ribonucleotide: step 1/1. Its function is as follows. Catalyzes the reversible adenylation of nicotinate mononucleotide (NaMN) to nicotinic acid adenine dinucleotide (NaAD). This chain is Probable nicotinate-nucleotide adenylyltransferase, found in Bacteroides fragilis (strain YCH46).